Consider the following 185-residue polypeptide: Lysozyme g (185 aa).

Glu73 is an active-site residue.

This sequence belongs to the glycosyl hydrolase 23 family.

It carries out the reaction Hydrolysis of (1-&gt;4)-beta-linkages between N-acetylmuramic acid and N-acetyl-D-glucosamine residues in a peptidoglycan and between N-acetyl-D-glucosamine residues in chitodextrins.. The chain is Lysozyme g from Cyprinus carpio (Common carp).